The sequence spans 96 residues: Small ribosomal subunit protein bS6 (96 aa).

Belongs to the bacterial ribosomal protein bS6 family.

Functionally, binds together with bS18 to 16S ribosomal RNA. The polypeptide is Small ribosomal subunit protein bS6 (Thermobifida fusca (strain YX)).